The following is a 278-amino-acid chain: Tryptophan synthase alpha chain (278 aa).

Residues Glu61 and Asp72 each act as proton acceptor in the active site.

This sequence belongs to the TrpA family. In terms of assembly, tetramer of two alpha and two beta chains.

The enzyme catalyses (1S,2R)-1-C-(indol-3-yl)glycerol 3-phosphate + L-serine = D-glyceraldehyde 3-phosphate + L-tryptophan + H2O. Its pathway is amino-acid biosynthesis; L-tryptophan biosynthesis; L-tryptophan from chorismate: step 5/5. Functionally, the alpha subunit is responsible for the aldol cleavage of indoleglycerol phosphate to indole and glyceraldehyde 3-phosphate. The polypeptide is Tryptophan synthase alpha chain (Shewanella oneidensis (strain ATCC 700550 / JCM 31522 / CIP 106686 / LMG 19005 / NCIMB 14063 / MR-1)).